Reading from the N-terminus, the 352-residue chain is Photosystem II D2 protein (352 aa).

Position 2 is an N-acetylthreonine (Thr-2). Thr-2 is subject to Phosphothreonine. The helical transmembrane segment at 40–60 (CAYFALGGWLTGTTFVTSWYT) threads the bilayer. A chlorophyll a-binding site is contributed by His-117. A helical membrane pass occupies residues 124–140 (GFMLRQFEIARAVKIRP). Positions 129 and 142 each coordinate pheophytin a. A helical transmembrane segment spans residues 152 to 165 (VFVSVFLIYPLGQA). His-197 contacts chlorophyll a. Residues 207–227 (AALLCAIHGATVENTLFEDGD) traverse the membrane as a helical segment. His-214 and Phe-261 together coordinate a plastoquinone. Fe cation is bound at residue His-214. His-268 contributes to the Fe cation binding site. A helical membrane pass occupies residues 278–294 (GLWMSALGVVGLALNLR).

The protein belongs to the reaction center PufL/M/PsbA/D family. In terms of assembly, PSII is composed of 1 copy each of membrane proteins PsbA, PsbB, PsbC, PsbD, PsbE, PsbF, PsbH, PsbI, PsbJ, PsbK, PsbL, PsbM, PsbT, PsbX, PsbY, PsbZ, Psb30/Ycf12, at least 3 peripheral proteins of the oxygen-evolving complex and a large number of cofactors. It forms dimeric complexes. The D1/D2 heterodimer binds P680, chlorophylls that are the primary electron donor of PSII, and subsequent electron acceptors. It shares a non-heme iron and each subunit binds pheophytin, quinone, additional chlorophylls, carotenoids and lipids. There is also a Cl(-1) ion associated with D1 and D2, which is required for oxygen evolution. The PSII complex binds additional chlorophylls, carotenoids and specific lipids. is required as a cofactor.

The protein localises to the plastid. It localises to the chloroplast thylakoid membrane. It carries out the reaction 2 a plastoquinone + 4 hnu + 2 H2O = 2 a plastoquinol + O2. Its function is as follows. Photosystem II (PSII) is a light-driven water:plastoquinone oxidoreductase that uses light energy to abstract electrons from H(2)O, generating O(2) and a proton gradient subsequently used for ATP formation. It consists of a core antenna complex that captures photons, and an electron transfer chain that converts photonic excitation into a charge separation. The D1/D2 (PsbA/PsbD) reaction center heterodimer binds P680, the primary electron donor of PSII as well as several subsequent electron acceptors. D2 is needed for assembly of a stable PSII complex. In Tupiella akineta (Green alga), this protein is Photosystem II D2 protein.